A 259-amino-acid chain; its full sequence is MSDKLTIAGREFASRLIVGTGKYRSFQEMQRCHEASGADMVTVAVRRVNLTDRTKESLIDYIDRSKIFILPNTAGCYTADDAVRTAMLGREVGLSNWVKLEVIGDEKTLFPDNAGLLEATRILVKEGFAVLPYTNDDIVNARRLIEAGAAAVMPLAAPIGSGLGIQNPTNLRIFREMITEVPVIVDAGVGTASDAAIAMELGADGVLMNTAIAAAEDAVKMARAMKLGVECGRLAFESGRMAKKLYASASSPLTGVVGA.

Lysine 99 acts as the Schiff-base intermediate with DXP in catalysis. Residues glycine 160, 187-188 (AG), and 209-210 (NT) contribute to the 1-deoxy-D-xylulose 5-phosphate site.

The protein belongs to the ThiG family. In terms of assembly, homotetramer. Forms heterodimers with either ThiH or ThiS.

The protein resides in the cytoplasm. It carries out the reaction [ThiS sulfur-carrier protein]-C-terminal-Gly-aminoethanethioate + 2-iminoacetate + 1-deoxy-D-xylulose 5-phosphate = [ThiS sulfur-carrier protein]-C-terminal Gly-Gly + 2-[(2R,5Z)-2-carboxy-4-methylthiazol-5(2H)-ylidene]ethyl phosphate + 2 H2O + H(+). Its pathway is cofactor biosynthesis; thiamine diphosphate biosynthesis. Its function is as follows. Catalyzes the rearrangement of 1-deoxy-D-xylulose 5-phosphate (DXP) to produce the thiazole phosphate moiety of thiamine. Sulfur is provided by the thiocarboxylate moiety of the carrier protein ThiS. In vitro, sulfur can be provided by H(2)S. This Solibacter usitatus (strain Ellin6076) protein is Thiazole synthase.